Reading from the N-terminus, the 1364-residue chain is DNA-directed RNA polymerase subunit beta' (1364 aa).

Zn(2+)-binding residues include Cys-250, Cys-317, Cys-324, and Cys-327. Residues 1318–1342 are disordered; that stretch reads TRHNIDPSASTNAAFTRPDVDNELK.

This sequence belongs to the RNA polymerase beta' chain family. RpoC2 subfamily. As to quaternary structure, in cyanobacteria the RNAP catalytic core is composed of 2 alpha, 1 beta, 1 beta', 1 gamma and 1 omega subunit. When a sigma factor is associated with the core the holoenzyme is formed, which can initiate transcription. It depends on Zn(2+) as a cofactor.

The catalysed reaction is RNA(n) + a ribonucleoside 5'-triphosphate = RNA(n+1) + diphosphate. Its function is as follows. DNA-dependent RNA polymerase catalyzes the transcription of DNA into RNA using the four ribonucleoside triphosphates as substrates. The chain is DNA-directed RNA polymerase subunit beta' from Synechococcus sp. (strain CC9902).